The following is a 758-amino-acid chain: Probable adenosylcobalamin-dependent ribonucleoside-triphosphate reductase (758 aa).

Cys-194 and Cys-459 are joined by a disulfide. Residues 233–256 (IIIKGQLPPPPPQQQPQQQQQQHG) are disordered. Residues Cys-448 and Glu-450 contribute to the active site.

It belongs to the class II ribonucleoside-triphosphate reductase family. As to quaternary structure, monomer. Requires adenosylcob(III)alamin as cofactor.

The catalysed reaction is a 2'-deoxyribonucleoside 5'-triphosphate + [thioredoxin]-disulfide + H2O = a ribonucleoside 5'-triphosphate + [thioredoxin]-dithiol. This Dictyostelium discoideum (Social amoeba) protein is Probable adenosylcobalamin-dependent ribonucleoside-triphosphate reductase (rtpR).